Reading from the N-terminus, the 319-residue chain is Ribonucleoside-diphosphate reductase small chain (319 aa).

Fe cation is bound by residues aspartate 70, glutamate 101, and histidine 104. Tyrosine 108 is an active-site residue. 3 residues coordinate Fe cation: glutamate 163, glutamate 197, and histidine 200. The interaction with R1 stretch occupies residues 313 to 319 (FSLDVDF).

It belongs to the ribonucleoside diphosphate reductase small chain family. As to quaternary structure, interacts with RNR1/OPG080 subunit. Can interact with host RNR1 supunit. It depends on Fe cation as a cofactor.

The catalysed reaction is a 2'-deoxyribonucleoside 5'-diphosphate + [thioredoxin]-disulfide + H2O = a ribonucleoside 5'-diphosphate + [thioredoxin]-dithiol. In terms of biological role, ribonucleoside-diphosphate reductase holoenzyme provides the precursors necessary for viral DNA synthesis. Allows virus growth in non-dividing cells. Catalyzes the biosynthesis of deoxyribonucleotides from the corresponding ribonucleotides. The chain is Ribonucleoside-diphosphate reductase small chain (OPG048) from Variola virus.